A 327-amino-acid chain; its full sequence is Methionyl-tRNA formyltransferase (327 aa).

121-124 (SLLP) contributes to the (6S)-5,6,7,8-tetrahydrofolate binding site.

It belongs to the Fmt family.

The enzyme catalyses L-methionyl-tRNA(fMet) + (6R)-10-formyltetrahydrofolate = N-formyl-L-methionyl-tRNA(fMet) + (6S)-5,6,7,8-tetrahydrofolate + H(+). In terms of biological role, attaches a formyl group to the free amino group of methionyl-tRNA(fMet). The formyl group appears to play a dual role in the initiator identity of N-formylmethionyl-tRNA by promoting its recognition by IF2 and preventing the misappropriation of this tRNA by the elongation apparatus. In Burkholderia ambifaria (strain MC40-6), this protein is Methionyl-tRNA formyltransferase.